Here is a 1249-residue protein sequence, read N- to C-terminus: Myosin-1 (1249 aa).

A disordered region spans residues 1 to 42 (MGHSRRPAGGEKKSRGFGRSKAVADVGDGRQTGGKPQVKKAT). Residues 51 to 730 (IGVSDLTLLS…TLFALEAMRD (680 aa)) form the Myosin motor domain. ATP is bound at residue 144–151 (GESGAGKT). At serine 372 the chain carries Phosphoserine. The interval 419–501 (SIGILDIYGF…PGVFAALNDA (83 aa)) is actin-binding. 2 consecutive IQ domains span residues 734-754 (HNMAIRIQRAWRNYLRYRTEC) and 755-780 (AIRIQRFWRRTTGGLEFIKLRDQGHQ). The region spanning 788–978 (RRRMSLLGSR…TIHTGPGEPA (191 aa)) is the TH1 domain. Disordered regions lie at residues 962–1079 (DDSY…PKKP) and 1126–1249 (WTPE…DDDW). Over residues 1021 to 1035 (AAQPLPRATPQPAEP) the composition is skewed to pro residues. Over residues 1036–1051 (QPAARAVPQPVAAVAA) the composition is skewed to low complexity. Composition is skewed to pro residues over residues 1064 to 1077 (APPPPPPAAAPAPK) and 1139 to 1150 (TPKPAPPPPPAA). An SH3 domain is found at 1076 to 1137 (PKKPTAKVLY…PEAYLEEQVA (62 aa)). Over residues 1151 to 1169 (PRSTPAPATNGAAAAAKAK) the composition is skewed to low complexity. Residues 1200–1221 (VSMNSHDSSGGSGRGTPNSMSN) show a composition bias toward polar residues. Positions 1222–1231 (ASLAGGLAEA) are enriched in low complexity.

It belongs to the TRAFAC class myosin-kinesin ATPase superfamily. Myosin family. Phosphorylation of the TEDS site (Ser-372) is required for the polarization of the actin cytoskeleton. Phosphorylation probably activates the myosin-I ATPase activity.

It localises to the cytoplasm. The protein resides in the cytoskeleton. Its subcellular location is the actin patch. Functionally, type-I myosin implicated in the organization of the actin cytoskeleton. Required for proper actin cytoskeleton polarization. At the cell cortex, assembles in patch-like structures together with proteins from the actin-polymerizing machinery and promotes actin assembly. Functions as actin nucleation-promoting factor (NPF) for the Arp2/3 complex. Plays an important role in polarized growth, spore germination, hyphal morphogenesis, and septal wall formation. This is Myosin-1 (myoA) from Aspergillus fumigatus (strain ATCC MYA-4609 / CBS 101355 / FGSC A1100 / Af293) (Neosartorya fumigata).